A 639-amino-acid chain; its full sequence is Chaperone protein DnaK 1 (639 aa).

T199 carries the post-translational modification Phosphothreonine; by autocatalysis. Positions 603–612 are enriched in low complexity; the sequence is QQQAQAQQAP. Residues 603 to 639 are disordered; that stretch reads QQQAQAQQAPGGEGEQEAKQDDNVVDAEFEEVKDEKK. Positions 625–639 are enriched in acidic residues; the sequence is NVVDAEFEEVKDEKK.

Belongs to the heat shock protein 70 family.

Its function is as follows. Acts as a chaperone. This Photobacterium profundum (strain SS9) protein is Chaperone protein DnaK 1.